Here is a 92-residue protein sequence, read N- to C-terminus: C-C motif chemokine 3 (92 aa).

The first 26 residues, 1–26 (MQVSTAALAVLLCTVALCNRISATFA), serve as a signal peptide directing secretion. 2 cysteine pairs are disulfide-bonded: C33-C57 and C34-C73.

Belongs to the intercrine beta (chemokine CC) family. Self-associates. Also heterodimer of MIP-1-alpha(4-69) and MIP-1-beta(3-69). Interacts with CCR1.

It is found in the secreted. Functionally, monokine with inflammatory and chemokinetic properties. Binds to CCR1, CCR4 and CCR5. One of the major HIV-suppressive factors produced by CD8+ T-cells. Recombinant MIP-1-alpha induces a dose-dependent inhibition of different strains of HIV-1, HIV-2, and simian immunodeficiency virus (SIV). This is C-C motif chemokine 3 (CCL3) from Macaca mulatta (Rhesus macaque).